The chain runs to 551 residues: Chaperonin GroEL (551 aa).

Residues 29–32 (TAGP), K50, 86–90 (DGTTT), G417, and D499 each bind ATP.

The protein belongs to the chaperonin (HSP60) family. Forms a cylinder of 14 subunits composed of two heptameric rings stacked back-to-back. Interacts with the co-chaperonin GroES.

Its subcellular location is the cytoplasm. The catalysed reaction is ATP + H2O + a folded polypeptide = ADP + phosphate + an unfolded polypeptide.. Its function is as follows. Together with its co-chaperonin GroES, plays an essential role in assisting protein folding. The GroEL-GroES system forms a nano-cage that allows encapsulation of the non-native substrate proteins and provides a physical environment optimized to promote and accelerate protein folding. This chain is Chaperonin GroEL, found in Ehrlichia ruminantium (strain Gardel).